The following is a 260-amino-acid chain: Putative protein phosphatase 2C-like protein 44 (260 aa).

The 219-residue stretch at 41–259 folds into the PPM-type phosphatase domain; sequence YYTVDRLSYA…SSISCVVIRF (219 aa).

This sequence belongs to the PP2C family.

In Arabidopsis thaliana (Mouse-ear cress), this protein is Putative protein phosphatase 2C-like protein 44.